Consider the following 623-residue polypeptide: AFI1-like protein C776.06c (623 aa).

One can recognise a uDENN domain in the interval 5-204; that stretch reads DYLLTAIFDP…IDNIPKPGSE (200 aa). The 139-residue stretch at 248 to 386 folds into the cDENN domain; that stretch reads ISNLINTFID…SDATTTMDTK (139 aa). The dDENN domain maps to 388-476; it reads LFNNTSPFTP…WSWDNDDEKV (89 aa).

The protein belongs to the AFI1/mesA family.

The protein resides in the cytoplasm. It is found in the cell cortex. Its subcellular location is the nucleus. Its function is as follows. Involved in polarity establishment. This chain is AFI1-like protein C776.06c, found in Schizosaccharomyces pombe (strain 972 / ATCC 24843) (Fission yeast).